Consider the following 298-residue polypeptide: ATP synthase gamma chain (298 aa).

It belongs to the ATPase gamma chain family. In terms of assembly, F-type ATPases have 2 components, CF(1) - the catalytic core - and CF(0) - the membrane proton channel. CF(1) has five subunits: alpha(3), beta(3), gamma(1), delta(1), epsilon(1). CF(0) has three main subunits: a, b and c.

Its subcellular location is the cell membrane. Produces ATP from ADP in the presence of a proton gradient across the membrane. The gamma chain is believed to be important in regulating ATPase activity and the flow of protons through the CF(0) complex. The protein is ATP synthase gamma chain of Parafrankia sp. (strain EAN1pec).